A 551-amino-acid polypeptide reads, in one-letter code: MFS-type transporter ATEG_00331 (551 aa).

Residues 1–18 (MKAWLLVSSLCLSTFIAA) form the signal peptide. 4 helical membrane passes run 40-60 (LEFT…TPPW), 71-91 (PVLM…ALAI), 102-122 (IQGT…GDVF), and 132-152 (GVLG…GGAF). N-linked (GlcNAc...) asparagine glycans are attached at residues asparagine 165 and asparagine 178. The next 8 helical transmembrane spans lie at 179–199 (LTTS…FLEV), 206–228 (IIEG…TVMF), 233–255 (GYGG…FGIG), 324–344 (VYLL…GLYI), 354–374 (IYFG…LQPY), 380–400 (IIIF…APII), 417–437 (TVFF…GVIF), and 493–513 (SEWI…VFIS). Residue asparagine 524 is glycosylated (N-linked (GlcNAc...) asparagine).

It belongs to the major facilitator superfamily. TCR/Tet family.

It is found in the membrane. Functionally, MFS-type transporter; part of the gene cluster that mediates the biosynthesis of isoflavipucine. This chain is MFS-type transporter ATEG_00331, found in Aspergillus terreus (strain NIH 2624 / FGSC A1156).